The primary structure comprises 469 residues: ATP sulfurylase 4, chloroplastic (469 aa).

The N-terminal 51 residues, 1 to 51, are a transit peptide targeting the chloroplast; it reads MASSAAAIVSGSPFRSSPLIHNHHASRYAPGSISVVSLPRQVSRRGLSVKS.

It belongs to the sulfate adenylyltransferase family. As to quaternary structure, homotetramer. In terms of tissue distribution, expressed in roots and leaves.

Its subcellular location is the plastid. It localises to the chloroplast stroma. It catalyses the reaction sulfate + ATP + H(+) = adenosine 5'-phosphosulfate + diphosphate. It functions in the pathway sulfur metabolism; hydrogen sulfide biosynthesis; sulfite from sulfate: step 1/3. In terms of biological role, sulfate adenylyltransferase. Catalyzes the first step of the sulfate assimilation pathway. The polypeptide is ATP sulfurylase 4, chloroplastic (APS4) (Arabidopsis thaliana (Mouse-ear cress)).